The following is a 403-amino-acid chain: Phosphoglycerate kinase (403 aa).

Residues 21–23 (DFN), arginine 36, 59–62 (HLGR), arginine 119, and arginine 154 contribute to the substrate site. Residues lysine 207, glycine 299, glutamate 330, and 357 to 360 (GGDA) each bind ATP.

It belongs to the phosphoglycerate kinase family. As to quaternary structure, monomer.

It is found in the cytoplasm. It catalyses the reaction (2R)-3-phosphoglycerate + ATP = (2R)-3-phospho-glyceroyl phosphate + ADP. Its pathway is carbohydrate degradation; glycolysis; pyruvate from D-glyceraldehyde 3-phosphate: step 2/5. The sequence is that of Phosphoglycerate kinase from Chlamydia trachomatis serovar L2 (strain ATCC VR-902B / DSM 19102 / 434/Bu).